The primary structure comprises 357 residues: Alanine racemase (357 aa).

The Proton acceptor; specific for D-alanine role is filled by Lys-34. The residue at position 34 (Lys-34) is an N6-(pyridoxal phosphate)lysine. Arg-127 lines the substrate pocket. Catalysis depends on Tyr-252, which acts as the Proton acceptor; specific for L-alanine. Met-301 provides a ligand contact to substrate.

The protein belongs to the alanine racemase family. It depends on pyridoxal 5'-phosphate as a cofactor.

It carries out the reaction L-alanine = D-alanine. It participates in amino-acid biosynthesis; D-alanine biosynthesis; D-alanine from L-alanine: step 1/1. Functionally, catalyzes the interconversion of L-alanine and D-alanine. May also act on other amino acids. The polypeptide is Alanine racemase (alr) (Dichelobacter nodosus (strain VCS1703A)).